Reading from the N-terminus, the 154-residue chain is Urease accessory protein UreE (154 aa).

Belongs to the UreE family.

It is found in the cytoplasm. Functionally, involved in urease metallocenter assembly. Binds nickel. Probably functions as a nickel donor during metallocenter assembly. This chain is Urease accessory protein UreE, found in Escherichia coli O157:H7.